The following is a 940-amino-acid chain: Alanine--tRNA ligase (940 aa).

H581, H585, C683, and H687 together coordinate Zn(2+).

It belongs to the class-II aminoacyl-tRNA synthetase family. It depends on Zn(2+) as a cofactor.

The protein resides in the cytoplasm. The enzyme catalyses tRNA(Ala) + L-alanine + ATP = L-alanyl-tRNA(Ala) + AMP + diphosphate. Its function is as follows. Catalyzes the attachment of alanine to tRNA(Ala) in a two-step reaction: alanine is first activated by ATP to form Ala-AMP and then transferred to the acceptor end of tRNA(Ala). Also edits incorrectly charged Ser-tRNA(Ala) and Gly-tRNA(Ala) via its editing domain. The polypeptide is Alanine--tRNA ligase (Leptospira borgpetersenii serovar Hardjo-bovis (strain JB197)).